We begin with the raw amino-acid sequence, 1347 residues long: Spermatogenesis-associated protein 31A3 (1347 aa).

The chain crosses the membrane as a helical span at residues 23-43 (PWVLDIFLTLVFALGFFFLLL). Disordered regions lie at residues 55–87 (PSPS…GREC), 108–142 (HLDK…HEPM), 154–235 (SPDP…STLI), 373–397 (EQDT…GPQK), 627–658 (QDES…EAQK), 900–955 (RGIP…REAV), 1084–1161 (VHEE…PSVS), and 1313–1335 (KAVS…SHHH). Positions 60-82 (GKRKCPVGRRRRPRGRMKNHSLR) are enriched in basic residues. Positions 165-178 (LASTPSPGPMTTSV) are enriched in polar residues. A compositionally biased stretch (pro residues) spans 198–211 (PEPPALFPHPPHTP). 2 stretches are compositionally biased toward polar residues: residues 627–651 (QDES…STGE) and 927–948 (LTYS…SSKA). Composition is skewed to basic and acidic residues over residues 1108–1127 (HKSE…RLEG) and 1137–1146 (RKTEDTHQDE).

The protein belongs to the SPATA31 family.

The protein resides in the membrane. In terms of biological role, may play a role in spermatogenesis. In Homo sapiens (Human), this protein is Spermatogenesis-associated protein 31A3 (SPATA31A3).